The chain runs to 504 residues: Maturase K (504 aa).

It belongs to the intron maturase 2 family. MatK subfamily.

The protein resides in the plastid. It localises to the chloroplast. Its function is as follows. Usually encoded in the trnK tRNA gene intron. Probably assists in splicing its own and other chloroplast group II introns. The polypeptide is Maturase K (Ochroma pyramidale (Balsa)).